The primary structure comprises 310 residues: AMMECR1-like protein (310 aa).

The tract at residues 26–92 (LSGSGTHSHG…SGALSPLPRP (67 aa)) is disordered. Polar residues-rich tracts occupy residues 28 to 66 (GSGT…NVSD) and 74 to 84 (SPITRMNTASG). At Ser-74 the chain carries Phosphoserine. The 195-residue stretch at 97–291 (NSTKNLVVTA…ISYAEYIASR (195 aa)) folds into the AMMECR1 domain.

This Mus musculus (Mouse) protein is AMMECR1-like protein (Ammecr1l).